A 236-amino-acid chain; its full sequence is Leucyl/phenylalanyl-tRNA--protein transferase (236 aa).

Belongs to the L/F-transferase family.

Its subcellular location is the cytoplasm. It catalyses the reaction N-terminal L-lysyl-[protein] + L-leucyl-tRNA(Leu) = N-terminal L-leucyl-L-lysyl-[protein] + tRNA(Leu) + H(+). It carries out the reaction N-terminal L-arginyl-[protein] + L-leucyl-tRNA(Leu) = N-terminal L-leucyl-L-arginyl-[protein] + tRNA(Leu) + H(+). The enzyme catalyses L-phenylalanyl-tRNA(Phe) + an N-terminal L-alpha-aminoacyl-[protein] = an N-terminal L-phenylalanyl-L-alpha-aminoacyl-[protein] + tRNA(Phe). Functionally, functions in the N-end rule pathway of protein degradation where it conjugates Leu, Phe and, less efficiently, Met from aminoacyl-tRNAs to the N-termini of proteins containing an N-terminal arginine or lysine. The polypeptide is Leucyl/phenylalanyl-tRNA--protein transferase (Aliivibrio salmonicida (strain LFI1238) (Vibrio salmonicida (strain LFI1238))).